A 334-amino-acid chain; its full sequence is Phospholipase A1 2 (334 aa).

The first 23 residues, Met-1–Gly-23, serve as a signal peptide directing secretion. A propeptide spanning residues Asp-24–Arg-33 is cleaved from the precursor. Cys-37 and Cys-120 form a disulfide bridge. Catalysis depends on Ser-170, which acts as the Nucleophile. Residue Asp-198 is the Charge relay system of the active site. Disulfide bonds link Cys-209/Cys-214 and Cys-252/Cys-261. Catalysis depends on His-263, which acts as the Charge relay system. Cystine bridges form between Cys-278–Cys-302, Cys-279–Cys-327, and Cys-295–Cys-300.

The protein belongs to the AB hydrolase superfamily. Lipase family. Post-translationally, not glycosylated. Expressed by the venom gland.

The protein localises to the secreted. The catalysed reaction is a 1,2-diacyl-sn-glycero-3-phosphocholine + H2O = a 2-acyl-sn-glycero-3-phosphocholine + a fatty acid + H(+). Catalyzes the hydrolysis of phosphatidylcholine with phospholipase A1 activity (6.3 U/ml). May act as an allergen and induce hemolytic activity. In Vespa affinis (Lesser banded hornet), this protein is Phospholipase A1 2.